A 156-amino-acid chain; its full sequence is Transcriptional repressor NrdR (156 aa).

The segment at 3-34 is a zinc-finger region; sequence CPYCGHLDNKVIDSRINKDATITRRRRSCLAC. The region spanning 49 to 139 is the ATP-cone domain; the sequence is PMLVKKDGRR…VYRQFKDVDE (91 aa).

The protein belongs to the NrdR family. Zn(2+) serves as cofactor.

Its function is as follows. Negatively regulates transcription of bacterial ribonucleotide reductase nrd genes and operons by binding to NrdR-boxes. The chain is Transcriptional repressor NrdR from Desulfotalea psychrophila (strain LSv54 / DSM 12343).